Consider the following 244-residue polypeptide: Ribonuclease 3 (244 aa).

The region spanning 5–136 is the RNase III domain; that stretch reads LAELERAIGI…LVGAIYLDQG (132 aa). Glu49 serves as a coordination point for Mg(2+). Asp53 is a catalytic residue. Asp122 and Glu125 together coordinate Mg(2+). Glu125 is an active-site residue. Positions 161–229 constitute a DRBM domain; it reads DPTTRLQELM…ARKALAAWDK (69 aa).

The protein belongs to the ribonuclease III family. Homodimer. It depends on Mg(2+) as a cofactor.

It localises to the cytoplasm. The catalysed reaction is Endonucleolytic cleavage to 5'-phosphomonoester.. Functionally, digests double-stranded RNA. Involved in the processing of primary rRNA transcript to yield the immediate precursors to the large and small rRNAs (23S and 16S). Processes some mRNAs, and tRNAs when they are encoded in the rRNA operon. Processes pre-crRNA and tracrRNA of type II CRISPR loci if present in the organism. This Chloroflexus aurantiacus (strain ATCC 29364 / DSM 637 / Y-400-fl) protein is Ribonuclease 3.